Reading from the N-terminus, the 434-residue chain is Bestrophin homolog 12 (434 aa).

The next 4 membrane-spanning stretches (helical) occupy residues 31–51, 76–96, 244–264, and 278–298; these read KVIL…FLVF, VCIP…DQWE, IPIP…YFFF, and WALS…FLVG.

Belongs to the anion channel-forming bestrophin (TC 1.A.46) family. Calcium-sensitive chloride channel subfamily. Forms oligomers.

It is found in the cell membrane. In terms of biological role, forms chloride channels. The protein is Bestrophin homolog 12 (best-12) of Caenorhabditis elegans.